The chain runs to 321 residues: Anthranilate phosphoribosyltransferase (321 aa).

5-phospho-alpha-D-ribose 1-diphosphate-binding positions include Gly-72, 75-76 (GD), Thr-80, 82-85 (NVST), 99-107 (KHGNVSITS), and Ser-111. An anthranilate-binding site is contributed by Gly-72. Residue Ser-84 coordinates Mg(2+). Anthranilate is bound at residue Asn-102. Anthranilate is bound at residue Arg-157. Residues Asp-216 and Glu-217 each contribute to the Mg(2+) site.

Belongs to the anthranilate phosphoribosyltransferase family. As to quaternary structure, homodimer. The cofactor is Mg(2+).

The enzyme catalyses N-(5-phospho-beta-D-ribosyl)anthranilate + diphosphate = 5-phospho-alpha-D-ribose 1-diphosphate + anthranilate. It participates in amino-acid biosynthesis; L-tryptophan biosynthesis; L-tryptophan from chorismate: step 2/5. Catalyzes the transfer of the phosphoribosyl group of 5-phosphorylribose-1-pyrophosphate (PRPP) to anthranilate to yield N-(5'-phosphoribosyl)-anthranilate (PRA). This is Anthranilate phosphoribosyltransferase from Methanococcus maripaludis (strain C5 / ATCC BAA-1333).